The following is a 355-amino-acid chain: UDP-N-acetylglucosamine--N-acetylmuramyl-(pentapeptide) pyrophosphoryl-undecaprenol N-acetylglucosamine transferase (355 aa).

UDP-N-acetyl-alpha-D-glucosamine-binding positions include 14-16 (TGG), Asn126, Arg164, Ser190, Ile243, 262-267 (ALTVAE), and Gln288.

It belongs to the glycosyltransferase 28 family. MurG subfamily.

The protein resides in the cell inner membrane. The catalysed reaction is di-trans,octa-cis-undecaprenyl diphospho-N-acetyl-alpha-D-muramoyl-L-alanyl-D-glutamyl-meso-2,6-diaminopimeloyl-D-alanyl-D-alanine + UDP-N-acetyl-alpha-D-glucosamine = di-trans,octa-cis-undecaprenyl diphospho-[N-acetyl-alpha-D-glucosaminyl-(1-&gt;4)]-N-acetyl-alpha-D-muramoyl-L-alanyl-D-glutamyl-meso-2,6-diaminopimeloyl-D-alanyl-D-alanine + UDP + H(+). The protein operates within cell wall biogenesis; peptidoglycan biosynthesis. Functionally, cell wall formation. Catalyzes the transfer of a GlcNAc subunit on undecaprenyl-pyrophosphoryl-MurNAc-pentapeptide (lipid intermediate I) to form undecaprenyl-pyrophosphoryl-MurNAc-(pentapeptide)GlcNAc (lipid intermediate II). The polypeptide is UDP-N-acetylglucosamine--N-acetylmuramyl-(pentapeptide) pyrophosphoryl-undecaprenol N-acetylglucosamine transferase (Psychromonas ingrahamii (strain DSM 17664 / CCUG 51855 / 37)).